We begin with the raw amino-acid sequence, 148 residues long: uncharacterized protein (148 aa).

A helical transmembrane segment spans residues 22 to 40 (YFLSLTVVISIIHLFTTCV). The histidine-rich stretch occupies residues 43 to 141 (HNHSTHFPYL…YYPISRHYLH (99 aa)).

It localises to the host membrane. This is an uncharacterized protein from African swine fever virus (strain Badajoz 1971 Vero-adapted) (Ba71V).